A 373-amino-acid chain; its full sequence is mRNA export factor rae-1 (373 aa).

Met-1 bears the N-acetylmethionine mark. 4 WD repeats span residues 40–82 (APED…TFEG), 87–126 (NIPAPILDIAWIEDSSKIFIACADKEARLWDLASNQVAVV), 128–169 (THDG…NQTQ), and 276–315 (QEIYAVNDICFHPQHGTLVTIGSDGRYSMWDKDARTKLKT).

It belongs to the WD repeat rae1 family. The nuclear pore complex (NPC) constitutes the exclusive means of nucleocytoplasmic transport. NPCs allow the passive diffusion of ions and small molecules and the active, nuclear transport receptor-mediated bidirectional transport of macromolecules such as proteins, RNAs, ribonucleoparticles (RNPs), and ribosomal subunits across the nuclear envelope. Interacts with rpm-1. In terms of tissue distribution, expressed along the ventral and dorsal nerve cords.

The protein resides in the nucleus. Its subcellular location is the nuclear pore complex. It localises to the cell projection. The protein localises to the axon. It is found in the synapse. Its function is as follows. Functions as a component of the nuclear pore complex (NPC). NPC components, collectively referred to as nucleoporins (NUPs), can play the role of both NPC structural components and of docking or interaction partners for transiently associated nuclear transport factors. It is specifically important for nuclear mRNA export. Has a role in neuronal development, where it acts downstream of rpm-1 to control axon termination and synapse formation in anterior lateral microtubule (ALM) and posterior lateral microtubule (PLM) mechanosensory neurons. This chain is mRNA export factor rae-1, found in Caenorhabditis elegans.